The following is a 651-amino-acid chain: Acetyl-coenzyme A synthetase (651 aa).

CoA contacts are provided by residues 189-192 (RGGK), Thr311, and Asn335. ATP is bound by residues 387-389 (GEP), 411-416 (DTWWQT), Asp500, and Arg515. Ser523 is a CoA binding site. ATP is bound at residue Arg526. The Mg(2+) site is built by Val537, His539, and Val542. Arg584 is a CoA binding site. Lys609 is subject to N6-acetyllysine.

Belongs to the ATP-dependent AMP-binding enzyme family. Mg(2+) is required as a cofactor. Acetylated. Deacetylation by the SIR2-homolog deacetylase activates the enzyme.

It carries out the reaction acetate + ATP + CoA = acetyl-CoA + AMP + diphosphate. Its function is as follows. Catalyzes the conversion of acetate into acetyl-CoA (AcCoA), an essential intermediate at the junction of anabolic and catabolic pathways. AcsA undergoes a two-step reaction. In the first half reaction, AcsA combines acetate with ATP to form acetyl-adenylate (AcAMP) intermediate. In the second half reaction, it can then transfer the acetyl group from AcAMP to the sulfhydryl group of CoA, forming the product AcCoA. The sequence is that of Acetyl-coenzyme A synthetase from Rhizobium leguminosarum bv. trifolii (strain WSM2304).